The primary structure comprises 129 residues: UPF0344 protein SAB0838 (129 aa).

The next 4 helical transmembrane spans lie at 1–21 (MLHLHILSWVLAIILFIATYL), 36–56 (LHMVLRLFMLLMLISGFWILI), 67–87 (MLLTLKMLCGVAVVGLMEVSI), and 99–119 (MFWITIALIIITMVLGVILPL).

The protein belongs to the UPF0344 family.

It localises to the cell membrane. This is UPF0344 protein SAB0838 from Staphylococcus aureus (strain bovine RF122 / ET3-1).